Reading from the N-terminus, the 336-residue chain is Large ribosomal subunit protein uL1 (336 aa).

A large ribosomal subunit protein uL1 region spans residues 1 to 245 (MANQKKVTNK…VKKTAKGKVI (245 aa)). Positions 246–336 (ADDSAKGENK…DVKKAKTSKK (91 aa)) are unknown. Residues 267-336 (AQKKKPSKHP…DVKKAKTSKK (70 aa)) form a disordered region. Basic residues predominate over residues 286–305 (KKKKVKKILKKAKPAKKAAV). Residues 306–315 (AKKPVVVNKK) show a composition bias toward low complexity.

Belongs to the universal ribosomal protein uL1 family. Part of the 50S ribosomal subunit.

Functionally, binds directly to 23S rRNA. The L1 stalk is quite mobile in the ribosome, and is involved in E site tRNA release. Protein L1 is also a translational repressor protein, it controls the translation of the L11 operon by binding to its mRNA. The sequence is that of Large ribosomal subunit protein uL1 from Malacoplasma penetrans (strain HF-2) (Mycoplasma penetrans).